The chain runs to 433 residues: 3-phosphoshikimate 1-carboxyvinyltransferase (433 aa).

3-phosphoshikimate-binding residues include Lys23, Ser24, and Arg28. Lys23 is a binding site for phosphoenolpyruvate. Phosphoenolpyruvate is bound by residues Gly95 and Arg123. The 3-phosphoshikimate site is built by Ser170, Ser171, Gln172, Ser198, Asp317, and Lys344. Residue Gln172 participates in phosphoenolpyruvate binding. Residue Asp317 is the Proton acceptor of the active site. Residues Arg348, Arg391, and Lys416 each contribute to the phosphoenolpyruvate site.

Belongs to the EPSP synthase family. In terms of assembly, monomer.

The protein localises to the cytoplasm. The enzyme catalyses 3-phosphoshikimate + phosphoenolpyruvate = 5-O-(1-carboxyvinyl)-3-phosphoshikimate + phosphate. It participates in metabolic intermediate biosynthesis; chorismate biosynthesis; chorismate from D-erythrose 4-phosphate and phosphoenolpyruvate: step 6/7. Its function is as follows. Catalyzes the transfer of the enolpyruvyl moiety of phosphoenolpyruvate (PEP) to the 5-hydroxyl of shikimate-3-phosphate (S3P) to produce enolpyruvyl shikimate-3-phosphate and inorganic phosphate. This Neisseria gonorrhoeae (strain NCCP11945) protein is 3-phosphoshikimate 1-carboxyvinyltransferase.